The chain runs to 246 residues: 3-oxoacyl-[acyl-carrier-protein] reductase FabG (246 aa).

NADP(+) is bound by residues 11-14 (GASR), Ser-36, 62-63 (DV), and Asn-89. Ser-141 serves as a coordination point for substrate. Catalysis depends on Tyr-154, which acts as the Proton acceptor. Residues 154–158 (YVAAK) and Ile-187 each bind NADP(+).

The protein belongs to the short-chain dehydrogenases/reductases (SDR) family. As to quaternary structure, homotetramer.

The enzyme catalyses a (3R)-hydroxyacyl-[ACP] + NADP(+) = a 3-oxoacyl-[ACP] + NADPH + H(+). It functions in the pathway lipid metabolism; fatty acid biosynthesis. Its function is as follows. Catalyzes the NADPH-dependent reduction of beta-ketoacyl-ACP substrates to beta-hydroxyacyl-ACP products, the first reductive step in the elongation cycle of fatty acid biosynthesis. This Bacillus subtilis (strain 168) protein is 3-oxoacyl-[acyl-carrier-protein] reductase FabG (fabG).